The sequence spans 624 residues: Chaperone protein HtpG (624 aa).

Positions 1–336 (MKGQETRGFQ…SNDLPLNVSR (336 aa)) are a; substrate-binding. The b stretch occupies residues 337–552 (EILQDSTVTR…ADEMGTQMAK (216 aa)). Positions 553–624 (LFAAAGQAMP…IKRVNALLLG (72 aa)) are c.

This sequence belongs to the heat shock protein 90 family. In terms of assembly, homodimer.

Its subcellular location is the cytoplasm. Functionally, molecular chaperone. Has ATPase activity. This chain is Chaperone protein HtpG, found in Enterobacter sp. (strain 638).